A 380-amino-acid polypeptide reads, in one-letter code: uncharacterized protein (380 aa).

Disordered regions lie at residues 278-323 (AATI…PRVA) and 345-368 (SLPGRESTPSDDGGSLHPSGRPRR). Residues 301 to 319 (RNGPRRPARRGTSRGRRCA) show a composition bias toward basic residues.

This is an uncharacterized protein from Mycobacterium tuberculosis (strain CDC 1551 / Oshkosh).